Reading from the N-terminus, the 144-residue chain is Large ribosomal subunit protein uL15 (144 aa).

The segment at 1 to 53 (MRLNTLSPAEGSKHASKRLGRGIGSGLGKTGGRGHKGQKSRSGGGVRRGFEGG) is disordered. The segment covering 21-31 (RGIGSGLGKTG) has biased composition (gly residues).

The protein belongs to the universal ribosomal protein uL15 family. Part of the 50S ribosomal subunit.

In terms of biological role, binds to the 23S rRNA. This is Large ribosomal subunit protein uL15 from Edwardsiella ictaluri (strain 93-146).